The primary structure comprises 157 residues: Ribosome maturation factor RimP (157 aa).

The protein belongs to the RimP family.

Its subcellular location is the cytoplasm. Its function is as follows. Required for maturation of 30S ribosomal subunits. This chain is Ribosome maturation factor RimP, found in Enterococcus faecalis (strain ATCC 700802 / V583).